The sequence spans 762 residues: Glucan endo-1,3-beta-glucosidase BGN13.1 (762 aa).

Residues 1-16 (MLKLTALVALLLGAAS) form the signal peptide. A propeptide spanning residues 17–33 (ATPTPSPPASDEGITKR) is cleaved from the precursor.

Belongs to the glycosyl hydrolase 55 family. Post-translationally, does not seem to be glycosylated.

It localises to the secreted. The catalysed reaction is Hydrolysis of (1-&gt;3)-beta-D-glucosidic linkages in (1-&gt;3)-beta-D-glucans.. Inhibited by glucose. Involved in mycoparasitism, hydrolyzes yeast and fungal cell walls. Classified as a small-oligosaccharide-producing type based its the end products: glucose, laminaribiose or laminaritetraose. In Trichoderma harzianum (Hypocrea lixii), this protein is Glucan endo-1,3-beta-glucosidase BGN13.1 (bgn13.1).